The primary structure comprises 112 residues: Cytochrome c2 (112 aa).

Heme c-binding residues include Cys-14, Cys-17, His-18, and Met-91.

Belongs to the cytochrome c family. Binds 1 heme c group covalently per subunit.

Functionally, cytochrome c2 is found mainly in purple, non-sulfur, photosynthetic bacteria where it functions as the electron donor to the oxidized bacteriochlorophyll in the photophosphorylation pathway. However, it may also have a role in the respiratory chain and is found in some non-photosynthetic bacteria. This Rhodospirillum rubrum protein is Cytochrome c2 (cycA).